The following is a 429-amino-acid chain: Transcriptional adapter 3 (429 aa).

The stretch at 41–70 (IEELDTLQLELETLLSSASRRLRALEEQRQ) forms a coiled coil. Disordered stretches follow at residues 86–132 (KLEK…TKVQ), 208–257 (EERR…PFGP), and 274–308 (PMED…HTRS). Basic and acidic residues-rich tracts occupy residues 208–221 (EERR…DKKK) and 230–249 (LDAK…HEPP). A coiled-coil region spans residues 364–404 (LLKLAREEMRKQELRQRVRVADNEVMEAFRRIMAARQKKRT).

This sequence belongs to the NGG1 family.

The protein localises to the nucleus. Its function is as follows. Functions as a component of the PCAF complex. The PCAF complex is capable of efficiently acetylating histones in a nucleosomal context. The sequence is that of Transcriptional adapter 3 (tada3) from Danio rerio (Zebrafish).